The primary structure comprises 114 residues: Large ribosomal subunit protein uL18 (114 aa).

The protein belongs to the universal ribosomal protein uL18 family. Part of the 50S ribosomal subunit; part of the 5S rRNA/L5/L18/L25 subcomplex. Contacts the 5S and 23S rRNAs.

In terms of biological role, this is one of the proteins that bind and probably mediate the attachment of the 5S RNA into the large ribosomal subunit, where it forms part of the central protuberance. This chain is Large ribosomal subunit protein uL18, found in Porphyromonas gingivalis (strain ATCC BAA-308 / W83).